A 185-amino-acid polypeptide reads, in one-letter code: Urease accessory protein UreE (185 aa).

Positions 153–185 are disordered; it reads LRANSAQGHGHSHSHSHDHHGYHHHGDGHWHKH. The span at 162 to 175 shows a compositional bias: basic residues; that stretch reads GHSHSHSHDHHGYH. The segment covering 176-185 has biased composition (basic and acidic residues); that stretch reads HHGDGHWHKH.

Belongs to the UreE family.

The protein localises to the cytoplasm. Functionally, involved in urease metallocenter assembly. Binds nickel. Probably functions as a nickel donor during metallocenter assembly. The protein is Urease accessory protein UreE of Haemophilus influenzae (strain PittEE).